A 351-amino-acid polypeptide reads, in one-letter code: DNA polymerase IV (351 aa).

A UmuC domain is found at 4–185 (IIHVDMDCFF…LPLAKIPGVG (182 aa)). Mg(2+)-binding residues include aspartate 8 and aspartate 103. The active site involves glutamate 104.

Belongs to the DNA polymerase type-Y family. Monomer. The cofactor is Mg(2+).

It localises to the cytoplasm. It catalyses the reaction DNA(n) + a 2'-deoxyribonucleoside 5'-triphosphate = DNA(n+1) + diphosphate. Its function is as follows. Poorly processive, error-prone DNA polymerase involved in untargeted mutagenesis. Copies undamaged DNA at stalled replication forks, which arise in vivo from mismatched or misaligned primer ends. These misaligned primers can be extended by PolIV. Exhibits no 3'-5' exonuclease (proofreading) activity. May be involved in translesional synthesis, in conjunction with the beta clamp from PolIII. The polypeptide is DNA polymerase IV (Shigella dysenteriae serotype 1 (strain Sd197)).